The chain runs to 200 residues: Inner membrane protein E199L (200 aa).

The N-linked (GlcNAc...) asparagine; by host glycan is linked to Asn131. The chain crosses the membrane as a helical span at residues 150 to 170 (INVMNHPFLTLILIILILIII).

It belongs to the asfivirus E199L family. Interacts with host PYCR2; this interaction results in autophagy activation. Post-translationally, contains intramolecular disulfide bonds.

The protein localises to the virion membrane. It localises to the host membrane. Functionally, essential for viral fusion with host endosomal membrane and core release. Not required for virus morphogenesis and egress. Induces complete autophagy through the interaction with and down-regulation of host PYCR2. The polypeptide is Inner membrane protein E199L (Ornithodoros (relapsing fever ticks)).